The following is a 137-amino-acid chain: Probable 4-amino-4-deoxy-L-arabinose-phosphoundecaprenol flippase subunit ArnF (137 aa).

Topologically, residues 1–3 are cytoplasmic; sequence MNA. Residues 4 to 24 traverse the membrane as a helical segment; it reads LRGWLAALGSMLLASAAQLGM. Over 25-44 the chain is Periplasmic; sequence RWGMSRLPLPEAWAGQTPER. The chain crosses the membrane as a helical span at residues 45–65; it reads AALLAVALAVAAYAASLLCWL. Over 66–76 the chain is Cytoplasmic; the sequence is AALRHLPLGRA. The helical transmembrane segment at 77-97 threads the bilayer; it reads YSLLSASYALVYLLAASLPAF. Over 98–100 the chain is Periplasmic; that stretch reads DET. The chain crosses the membrane as a helical span at residues 101-121; sequence FSTSKILGVGLVVLGVLTVNA. The Cytoplasmic segment spans residues 122 to 137; that stretch reads RRTAAAPAHHPSRKAP.

Belongs to the ArnF family. Heterodimer of ArnE and ArnF.

The protein localises to the cell inner membrane. It participates in bacterial outer membrane biogenesis; lipopolysaccharide biosynthesis. Translocates 4-amino-4-deoxy-L-arabinose-phosphoundecaprenol (alpha-L-Ara4N-phosphoundecaprenol) from the cytoplasmic to the periplasmic side of the inner membrane. This chain is Probable 4-amino-4-deoxy-L-arabinose-phosphoundecaprenol flippase subunit ArnF, found in Pseudomonas aeruginosa (strain LESB58).